The chain runs to 115 residues: Na(+)/H(+) antiporter subunit C1 (115 aa).

Transmembrane regions (helical) follow at residues 1 to 21 (MEIIMIFVSGILTSISVYLVL), 28 to 48 (IIMGTTLLTHAANLFLITMGG), and 72 to 92 (LILTAIVIAFATTAFFLVLAF).

This sequence belongs to the CPA3 antiporters (TC 2.A.63) subunit C family. May form a heterooligomeric complex that consists of seven subunits: mnhA1, mnhB1, mnhC1, mnhD1, mnhE1, mnhF1 and mnhG1.

Its subcellular location is the cell membrane. In terms of biological role, mnh complex is a Na(+)/H(+) antiporter involved in Na(+) excretion. The protein is Na(+)/H(+) antiporter subunit C1 (mnhC1) of Staphylococcus epidermidis (strain ATCC 35984 / DSM 28319 / BCRC 17069 / CCUG 31568 / BM 3577 / RP62A).